We begin with the raw amino-acid sequence, 132 residues long: Interleukin-5 (132 aa).

Positions 1–19 (MHLRLTLVALGAAYVCANA) are cleaved as a signal peptide. N-linked (GlcNAc...) asparagine glycosylation is found at Asn74 and Asn88.

The protein belongs to the IL-5 family. Homodimer; disulfide-linked. Interacts with IL5RA. Interacts with CSF2RB.

The protein localises to the secreted. Homodimeric cytokine expressed predominantly by T-lymphocytes and NK cells that plays an important role in the survival, differentiation, and chemotaxis of eosinophils. Also acts on activated and resting B-cells to induce immunoglobulin production, growth, and differentiation. Mechanistically, exerts its biological effects through a receptor composed of IL5RA subunit and the cytokine receptor common subunit beta/CSF2RB. Binding to the receptor leads to activation of various kinases including LYN, SYK and JAK2 and thereby propagates signals through the RAS-MAPK and JAK-STAT5 pathways respectively. The sequence is that of Interleukin-5 (IL5) from Ovis aries (Sheep).